A 400-amino-acid polypeptide reads, in one-letter code: Axin-like protein 1 (400 aa).

Residues 4–132 (RSKFSIDRVL…TTTADVNTTW (129 aa)) enclose the RGS domain. Disordered stretches follow at residues 190-233 (QETK…TLKV) and 278-306 (GTLERPNRLFTGTNNGFSTLQPKRRGSEA). Residues 194–210 (NSSETEEHAESPRKEKS) are compositionally biased toward basic and acidic residues. The segment covering 287-298 (FTGTNNGFSTLQ) has biased composition (polar residues). The DIX domain occupies 305 to 392 (EAPKMTVELR…RITAICRMCP (88 aa)).

Interacts with bar-1, dsh-2, gsk-3, and mig-5.

In terms of biological role, works in parallel with pry-1 in negatively regulating bar-1 signaling in vulval precursor cells and Q neuroblasts. Shown to have a role in excretory cell development. This is Axin-like protein 1 from Caenorhabditis elegans.